The chain runs to 140 residues: Large ribosomal subunit protein bL17 (140 aa).

The protein belongs to the bacterial ribosomal protein bL17 family. Part of the 50S ribosomal subunit. Contacts protein L32.

The protein is Large ribosomal subunit protein bL17 of Gluconobacter oxydans (strain 621H) (Gluconobacter suboxydans).